The primary structure comprises 1392 residues: Leucine-rich PPR motif-containing protein, mitochondrial (1392 aa).

The N-terminal 59 residues, M1 to Y59, are a transit peptide targeting the mitochondrion. PPR repeat units lie at residues L125–Y159, D160–P194, N195–I229, T230–P264, G265–F299, M300–I334, H402–I436, R437–P471, V677–M708, V709–L745, D746–A783, T784–S820, S821–R856, and R953–P987. Residues K151, K186, and K225 each carry the N6-acetyllysine modification. K291 is modified (N6-acetyllysine). Position 462 is an N6-acetyllysine (K462). Position 749 is an N6-acetyllysine (K749). The segment at A931–A1050 is RNA-binding. 3 positions are modified to phosphoserine: S1025, S1026, and S1028. PPR repeat units lie at residues G1030–F1064, S1065–L1101, N1102–P1136, S1137–M1175, V1176–E1210, and N1315–L1349. A Phosphoserine modification is found at S1137.

In terms of assembly, component of mRNP complexes associated with HNRPA1. Component of the complex, at least composed of LRPPRC, BECN1 and BCL2; the interactions prevent BECN1 from forming an autophagy-inducing complex with PIK3C3. Interacts with CECR2, HEBP2, MAP1S and UXT. Interacts with PPARGC1A. Interacts with FOXO1. Interacts (via N-terminus) with EIF4E; the interaction promotes association of EIF4E with 4ESE-containing mRNAs. Interacts with exportin XPO1/CRM1; interacts both alone and in complex with EIF4E and 4ESE-containing mRNAs to form an EIF4E-dependent mRNA export complex. Interacts with importin IPO8; the interaction occurs when LRPPRC is in its RNA-free form and returns LRPPRC to the nucleus for further export rounds. Interacts with BECN1. As to expression, strongly expressed in heart, liver and kidney. Weakly expressed in brain, skeletal muscle and testes.

It localises to the mitochondrion. It is found in the nucleus. The protein localises to the nucleoplasm. The protein resides in the nucleus inner membrane. Its subcellular location is the nucleus outer membrane. In terms of biological role, may play a role in RNA metabolism in both nuclei and mitochondria. In the nucleus binds to HNRPA1-associated poly(A) mRNAs and is part of nmRNP complexes at late stages of mRNA maturation which are possibly associated with nuclear mRNA export. Positively modulates nuclear export of mRNAs containing the EIF4E sensitivity element (4ESE) by binding simultaneously to both EIF4E and the 4ESE and acting as a platform for assembly for the RNA export complex. Also binds to exportin XPO1/CRM1 to engage the nuclear pore and traffic the bound mRNAs to the cytoplasm. May bind mature mRNA in the nucleus outer membrane. In mitochondria binds to poly(A) mRNA. Plays a role in translation or stability of mitochondrially encoded cytochrome c oxidase (COX) subunits. May be involved in transcription regulation. Cooperates with PPARGC1A to regulate certain mitochondrially encoded genes and gluconeogenic genes and may regulate docking of PPARGC1A to transcription factors. Seems to be involved in the transcription regulation of the multidrug-related genes MDR1 and MVP. Part of a nuclear factor that binds to the invMED1 element of MDR1 and MVP gene promoters. Binds single-stranded DNA. Required for maintaining mitochondrial potential. Suppresses the initiation of basal levels of autophagy and mitophagy by sustaining BCL2 levels. In Mus musculus (Mouse), this protein is Leucine-rich PPR motif-containing protein, mitochondrial (Lrpprc).